We begin with the raw amino-acid sequence, 379 residues long: Anhydro-N-acetylmuramic acid kinase (379 aa).

ATP is bound at residue Gly9–Asp16.

Belongs to the anhydro-N-acetylmuramic acid kinase family.

The enzyme catalyses 1,6-anhydro-N-acetyl-beta-muramate + ATP + H2O = N-acetyl-D-muramate 6-phosphate + ADP + H(+). Its pathway is amino-sugar metabolism; 1,6-anhydro-N-acetylmuramate degradation. It functions in the pathway cell wall biogenesis; peptidoglycan recycling. Catalyzes the specific phosphorylation of 1,6-anhydro-N-acetylmuramic acid (anhMurNAc) with the simultaneous cleavage of the 1,6-anhydro ring, generating MurNAc-6-P. Is required for the utilization of anhMurNAc either imported from the medium or derived from its own cell wall murein, and thus plays a role in cell wall recycling. The chain is Anhydro-N-acetylmuramic acid kinase from Acaryochloris marina (strain MBIC 11017).